The primary structure comprises 344 residues: UDP-galactose/UDP-glucose transporter 5B (344 aa).

A run of 8 helical transmembrane segments spans residues 16-36, 56-76, 115-135, 142-162, 176-196, 220-240, 246-266, and 292-312; these read LWKGVFAVSGIMSTLVIYGVL, LFLVFCNRLTTSAVSAGALLA, VQTLAKCAKMIPVMVWGTLIM, FDYLVAFLVTLGCSVFILFPA, TVWGVSLMAGYLGFDGFTSTF, CVLSFTGLILQGHLLPAVDFV, CLLDIALLSTVATASQFFISY, and CIWFSHPLSWEQCIGSVIVFG. The tract at residues 324-344 is disordered; that stretch reads KNSQTQPPPPELPQYEKVESS.

It belongs to the nucleotide-sugar transporter family. UDP-galactose:UMP antiporter (TC 2.A.7.11) subfamily.

The protein localises to the membrane. Sugar transporter involved in the transport of nucleotide-sugars from cytoplasm into the Golgi and/or the endoplasmic reticulum. The protein is UDP-galactose/UDP-glucose transporter 5B of Arabidopsis thaliana (Mouse-ear cress).